Consider the following 155-residue polypeptide: Glutamyl-tRNA(Gln) amidotransferase subunit C, chloroplastic/mitochondrial (155 aa).

A chloroplast and mitochondrion-targeting transit peptide spans 1–52 (MATRALLAVIYASPNRCYISPSRIKIQSLTCSSSSHYYQRQSRKNHRIARSY).

This sequence belongs to the GatC family. Subunit of the heterotrimeric GatCAB amidotransferase (AdT) complex, composed of A, B and C subunits.

The protein localises to the mitochondrion. Its subcellular location is the plastid. It is found in the chloroplast. It carries out the reaction L-glutamyl-tRNA(Gln) + L-glutamine + ATP + H2O = L-glutaminyl-tRNA(Gln) + L-glutamate + ADP + phosphate + H(+). Its function is as follows. Allows the formation of correctly charged Gln-tRNA(Gln) through the transamidation of misacylated Glu-tRNA(Gln) in chloroplasts and mitochondria. The reaction takes place in the presence of glutamine and ATP through an activated gamma-phospho-Glu-tRNA(Gln). This chain is Glutamyl-tRNA(Gln) amidotransferase subunit C, chloroplastic/mitochondrial, found in Arabidopsis thaliana (Mouse-ear cress).